We begin with the raw amino-acid sequence, 227 residues long: tRNA (guanine-N(7)-)-methyltransferase (227 aa).

Glu60, Glu85, Asp112, and Asp135 together coordinate S-adenosyl-L-methionine. The active site involves Asp135. Substrate is bound by residues Lys139, Asp171, and 206–209 (TKFE).

This sequence belongs to the class I-like SAM-binding methyltransferase superfamily. TrmB family.

The catalysed reaction is guanosine(46) in tRNA + S-adenosyl-L-methionine = N(7)-methylguanosine(46) in tRNA + S-adenosyl-L-homocysteine. It functions in the pathway tRNA modification; N(7)-methylguanine-tRNA biosynthesis. Functionally, catalyzes the formation of N(7)-methylguanine at position 46 (m7G46) in tRNA. This Thiobacillus denitrificans (strain ATCC 25259 / T1) protein is tRNA (guanine-N(7)-)-methyltransferase.